Consider the following 46-residue polypeptide: MGYDSRLDHLAATSWYPFFNNVTTRGEIIEPYSLTLDEACQFLKIS.

Its function is as follows. May be involved in H(2) production during fermentative growth. The protein is Protein YpdJ (ypdJ) of Escherichia coli (strain K12).